A 470-amino-acid chain; its full sequence is Proton-coupled amino acid transporter 3 (470 aa).

Over 1–46 (MSLLGRDYNSELNSLDNGPQSPSESSSSITSENVHPAGEAGLSMMQ) the chain is Cytoplasmic. Residues 10–20 (SELNSLDNGPQ) show a composition bias toward polar residues. The disordered stretch occupies residues 10 to 33 (SELNSLDNGPQSPSESSSSITSEN). Residues 21 to 31 (SPSESSSSITS) are compositionally biased toward low complexity. A helical transmembrane segment spans residues 47–67 (TLIHLLKCNIGTGLLGLPLAI). Topologically, residues 68-71 (KNAG) are extracellular. A helical membrane pass occupies residues 72-92 (LLVGPVSLLAIGVLTVHCMVI). Residues 93–137 (LLNCAQHLSQRLQKTFVNYGEATMYGLETCPNTWLRAHAVWGRYT) are Cytoplasmic-facing. The chain crosses the membrane as a helical span at residues 138-158 (VSFLLVITQLGFCSVYFMFMA). Residues 159–185 (DNLQQMVEKAHVTSNICQPREILTLTP) lie on the Extracellular side of the membrane. Residues 186–206 (ILDIRFYMLIILPFLILLVFI) form a helical membrane-spanning segment. Topologically, residues 207–210 (QNLK) are cytoplasmic. The chain crosses the membrane as a helical span at residues 211–231 (VLSVFSTLANITTLGSMALIF). The Extracellular segment spans residues 232–252 (EYIMEGIPYPSNLPLMANWKT). A helical membrane pass occupies residues 253-273 (FLLFFGTAIFTFEGVGMVLPL). At 274–284 (KNQMKHPQQFS) the chain is on the cytoplasmic side. A helical transmembrane segment spans residues 285-305 (FVLYLGMSIVIILYILLGTLG). Residues 306–337 (YMKFGSDTQASITLNLPNCWLYQSVKLMYSIG) are Extracellular-facing. Residues 338 to 358 (IFFTYALQFHVPAEIIIPFAI) form a helical membrane-spanning segment. Over 359 to 367 (SQVSESWAL) the chain is Cytoplasmic. A helical membrane pass occupies residues 368 to 388 (FVDLSVRSALVCLTCVSAILI). Residues 389-392 (PRLD) are Extracellular-facing. Residues 393–413 (LVISLVGSVSSSALALIIPAL) traverse the membrane as a helical segment. Residues 414 to 425 (LEIVIFYSEDMS) are Cytoplasmic-facing. The helical transmembrane segment at 426–446 (CVTIAKDIMISIVGLLGCIFG) threads the bilayer. Topologically, residues 447-470 (TYQALYELPQPISHSMANSTGVHA) are extracellular.

This sequence belongs to the amino acid/polyamine transporter 2 family. In terms of tissue distribution, specifically expressed in testis.

Its subcellular location is the membrane. The polypeptide is Proton-coupled amino acid transporter 3 (SLC36A3) (Homo sapiens (Human)).